A 332-amino-acid chain; its full sequence is Lipoyl synthase (332 aa).

[4Fe-4S] cluster-binding residues include C74, C79, C85, C100, C104, C107, and S314. A Radical SAM core domain is found at 85 to 303 (CFGKGTATFM…EEKAYEMGFS (219 aa)).

It belongs to the radical SAM superfamily. Lipoyl synthase family. Requires [4Fe-4S] cluster as cofactor.

It localises to the cytoplasm. It carries out the reaction [[Fe-S] cluster scaffold protein carrying a second [4Fe-4S](2+) cluster] + N(6)-octanoyl-L-lysyl-[protein] + 2 oxidized [2Fe-2S]-[ferredoxin] + 2 S-adenosyl-L-methionine + 4 H(+) = [[Fe-S] cluster scaffold protein] + N(6)-[(R)-dihydrolipoyl]-L-lysyl-[protein] + 4 Fe(3+) + 2 hydrogen sulfide + 2 5'-deoxyadenosine + 2 L-methionine + 2 reduced [2Fe-2S]-[ferredoxin]. The protein operates within protein modification; protein lipoylation via endogenous pathway; protein N(6)-(lipoyl)lysine from octanoyl-[acyl-carrier-protein]: step 2/2. Functionally, catalyzes the radical-mediated insertion of two sulfur atoms into the C-6 and C-8 positions of the octanoyl moiety bound to the lipoyl domains of lipoate-dependent enzymes, thereby converting the octanoylated domains into lipoylated derivatives. The protein is Lipoyl synthase of Polaromonas naphthalenivorans (strain CJ2).